Reading from the N-terminus, the 304-residue chain is Large ribosomal subunit protein uL2 (304 aa).

A disordered region spans residues 246–282 (HTRGTAMNPVDHPHGGGEGRTRGKHPESPWGWKTKGY). Residues 256-272 (DHPHGGGEGRTRGKHPE) show a composition bias toward basic and acidic residues.

The protein belongs to the universal ribosomal protein uL2 family. In terms of assembly, part of the 50S ribosomal subunit. Forms a bridge to the 30S subunit in the 70S ribosome.

Functionally, one of the primary rRNA binding proteins. Required for association of the 30S and 50S subunits to form the 70S ribosome, for tRNA binding and peptide bond formation. It has been suggested to have peptidyltransferase activity; this is somewhat controversial. Makes several contacts with the 16S rRNA in the 70S ribosome. The chain is Large ribosomal subunit protein uL2 from Aquifex aeolicus (strain VF5).